The following is a 199-amino-acid chain: Protein shisa-like-1 (199 aa).

Residues 1-25 (MTSCGQQSLNVLAVLFSLLFSAVLS) form the signal peptide. Over 26 to 97 (AHFRVCEPYT…SEGYMHNNYT (72 aa)) the chain is Extracellular. Asparagine 53 and asparagine 95 each carry an N-linked (GlcNAc...) asparagine glycan. Residues 98–118 (ALLGVWIYGFFVLMLLVLDLL) traverse the membrane as a helical segment. The Cytoplasmic portion of the chain corresponds to 119 to 199 (YYSAMNYDIC…PLMTFQSSSA (81 aa)). Positions 146–199 (PRRWGNPARAPRPGQRAPQPQPPPGPLPQAPQAVHTLRGDAHSPPLMTFQSSSA) are disordered. Over residues 152–163 (PARAPRPGQRAP) the composition is skewed to low complexity. Residues 164-174 (QPQPPPGPLPQ) are compositionally biased toward pro residues.

It belongs to the shisa family.

Its subcellular location is the membrane. This Homo sapiens (Human) protein is Protein shisa-like-1.